An 842-amino-acid chain; its full sequence is Envelope glycoprotein H (842 aa).

Residues 1–20 form the signal peptide; that stretch reads MRRPLCAALLAAAVLALAAG. The Virion surface portion of the chain corresponds to 21–802; that stretch reads APAAARGGAG…AGHEAPTFSP (782 aa). N-linked (GlcNAc...) asparagine; by host glycans are attached at residues N77 and N112. The tract at residues 240–303 is interaction with gL; the sequence is ERAAARLAVG…AAGPQRRAYV (64 aa). N617, N666, N760, and N783 each carry an N-linked (GlcNAc...) asparagine; by host glycan. A helical membrane pass occupies residues 803–823; that stretch reads AYVWASVGGALVAGTTIYAIA. The Intravirion portion of the chain corresponds to 824–842; it reads KMLCSSVPLARGYSSVPVF.

Belongs to the herpesviridae glycoprotein H family. Interacts with glycoprotein L (gL); this interaction is necessary for the correct processing and cell surface expression of gH. The heterodimer gH/gL seems to interact with gB trimers during fusion. N-glycosylated, O-glycosylated, and sialylated.

The protein localises to the virion membrane. Its subcellular location is the host cell membrane. It is found in the host endosome membrane. Its function is as follows. The heterodimer glycoprotein H-glycoprotein L is required for the fusion of viral and plasma membranes leading to virus entry into the host cell. Following initial binding to host receptor, membrane fusion is mediated by the fusion machinery composed of gB and the heterodimer gH/gL. May also be involved in the fusion between the virion envelope and the outer nuclear membrane during virion morphogenesis. The sequence is that of Envelope glycoprotein H from Bos taurus (Bovine).